The sequence spans 1112 residues: Plasma membrane calcium-transporting ATPase 2 (1112 aa).

Residues 1–94 (MGDMSNSDFY…NLIPPKKPKT (94 aa)) lie on the Cytoplasmic side of the membrane. A helical transmembrane segment spans residues 95-115 (FLQLVWEALQDVTLIILEIAA). Residues 116–152 (LISLGLSFYHPPGETGGESCGAAAGGVEDEGEADAGW) lie on the Extracellular side of the membrane. The chain crosses the membrane as a helical span at residues 153–173 (IEGAAILLSVVCVVLVTAFND). The Cytoplasmic segment spans residues 174–373 (WSKEKQFRGL…KEKSVLQGKL (200 aa)). A compositionally biased stretch (basic and acidic residues) spans 298–311 (EKKEKKGGAVEDGH). Residues 298–363 (EKKEKKGGAV…KERKKVSAPK (66 aa)) form a disordered region. The segment covering 312-327 (QNTGKMQDGNMESNQI) has biased composition (polar residues). Positions 351 to 363 (ADEKERKKVSAPK) are enriched in basic and acidic residues. Residues 374–393 (TKLAVQIGKAGLLMSAITVI) form a helical membrane-spanning segment. Topologically, residues 394-426 (ILVLYFAIDNFVMQKRPWMPECTPIYIQYFVKF) are extracellular. The chain crosses the membrane as a helical span at residues 427-444 (FIIGVTVLVVAVPEGLPL). The Cytoplasmic portion of the chain corresponds to 445–858 (AVTISLAYSV…MWGRNVYDSI (414 aa)). Asp-482 (4-aspartylphosphate intermediate) is an active-site residue. 2 residues coordinate Mg(2+): Asp-803 and Asp-807. The helical transmembrane segment at 859–878 (SKFLQFQLTVNVVAVIVAFT) threads the bilayer. Topologically, residues 879–888 (GACITQDSPL) are extracellular. A helical transmembrane segment spans residues 889–909 (KAVQMLWVNLIMDTFASLALA). The Cytoplasmic segment spans residues 910 to 929 (TEPPTESLLKRKPYGRNKPL). A helical transmembrane segment spans residues 930 to 952 (ISSTMTKNILGHGVYQLIIIFTL). Over 953-970 (LFVGEQIFDIDSGRNAPL) the chain is Extracellular. Residues 971–992 (HSPPSEHYTIIFNTFVMMQLFN) form a helical membrane-spanning segment. The Cytoplasmic segment spans residues 993–1011 (EINARKIHGERNVFDGIFR). A helical membrane pass occupies residues 1012–1033 (NPIFCSIVFGTFAVQIVIVQFG). At 1034–1043 (GKPFSCQPLD) the chain is on the extracellular side. The helical transmembrane segment at 1044–1065 (LEKWMWCVFLGLGELVWGQVIA) threads the bilayer. Residues 1066–1112 (TIPNSRLRFLRRAGQLTQKDELPEEDVNEENEEIDHAERELRRGQIL) lie on the Cytoplasmic side of the membrane. Residues 1086-1112 (ELPEEDVNEENEEIDHAERELRRGQIL) are disordered. Residues 1087–1098 (LPEEDVNEENEE) show a composition bias toward acidic residues. The span at 1099-1112 (IDHAERELRRGQIL) shows a compositional bias: basic and acidic residues. The tract at residues 1106–1112 (LRRGQIL) is calmodulin-binding subdomain A.

Belongs to the cation transport ATPase (P-type) (TC 3.A.3) family. Type IIB subfamily.

It is found in the cell membrane. The enzyme catalyses Ca(2+)(in) + ATP + H2O = Ca(2+)(out) + ADP + phosphate + H(+). Its function is as follows. This magnesium-dependent enzyme catalyzes the hydrolysis of ATP coupled with the transport of calcium out of the cell. The chain is Plasma membrane calcium-transporting ATPase 2 (atp2b2) from Oreochromis mossambicus (Mozambique tilapia).